Consider the following 188-residue polypeptide: MKKIGVLAFQGGVIEHVKKIEELGHIPVLVKKNEDLEGIDGLILPGGESTTIGKFLIETGLKDKILSLAEQGMPMWGTCAGAILLSKSIKNQGSGVLPLLDIVIERNAYGSQIDSFRKEVFVPRFNKTTECVFIRAPKIVDVGSNVEVLAQLDTPIAVLQGTILATTFHPELTSQNYWHSFFVENMIK.

47-49 (GES) lines the L-glutamine pocket. Cys79 serves as the catalytic Nucleophile. L-glutamine is bound by residues Arg106 and 134 to 135 (IR). Active-site charge relay system residues include His169 and Glu171.

Belongs to the glutaminase PdxT/SNO family. As to quaternary structure, in the presence of PdxS, forms a dodecamer of heterodimers. Only shows activity in the heterodimer.

It carries out the reaction aldehydo-D-ribose 5-phosphate + D-glyceraldehyde 3-phosphate + L-glutamine = pyridoxal 5'-phosphate + L-glutamate + phosphate + 3 H2O + H(+). It catalyses the reaction L-glutamine + H2O = L-glutamate + NH4(+). Its pathway is cofactor biosynthesis; pyridoxal 5'-phosphate biosynthesis. In terms of biological role, catalyzes the hydrolysis of glutamine to glutamate and ammonia as part of the biosynthesis of pyridoxal 5'-phosphate. The resulting ammonia molecule is channeled to the active site of PdxS. The protein is Pyridoxal 5'-phosphate synthase subunit PdxT of Caldicellulosiruptor saccharolyticus (strain ATCC 43494 / DSM 8903 / Tp8T 6331).